The primary structure comprises 329 residues: Fructose-1,6-bisphosphatase class 1 (329 aa).

Mg(2+) is bound by residues glutamate 84, aspartate 103, leucine 105, and aspartate 106. Substrate is bound by residues 106–109 (DGSS), asparagine 196, and lysine 262. Glutamate 268 is a Mg(2+) binding site.

Belongs to the FBPase class 1 family. As to quaternary structure, homotetramer. Mg(2+) is required as a cofactor.

The protein localises to the cytoplasm. The enzyme catalyses beta-D-fructose 1,6-bisphosphate + H2O = beta-D-fructose 6-phosphate + phosphate. It participates in carbohydrate biosynthesis; gluconeogenesis. In Shewanella pealeana (strain ATCC 700345 / ANG-SQ1), this protein is Fructose-1,6-bisphosphatase class 1.